A 124-amino-acid chain; its full sequence is Immunoglobulin lambda variable 5-52 (124 aa).

The signal sequence occupies residues 1 to 19; it reads MAWTLLLLVLLSHCTGSLS. The segment at 20-44 is framework-1; sequence QPVLTQPSSHSASSGASVRLTCMLS. An Ig-like domain is found at 21 to 124; sequence PVLTQPSSHS…CGTWHSNSKT (104 aa). Cys-41 and Cys-115 form a disulfide bridge. The segment at 45–53 is complementarity-determining-1; sequence SGFSVGDFW. Residues 54–70 are framework-2; sequence IRWYQQKPGNPPRYLLY. Positions 71-77 are complementarity-determining-2; the sequence is YHSDSNK. The tract at residues 78–115 is framework-3; sequence GQGSGVPSRFSGSNDASANAGILRISGLQPEDEADYYC. The segment at 116 to 124 is complementarity-determining-3; that stretch reads GTWHSNSKT.

In terms of assembly, immunoglobulins are composed of two identical heavy chains and two identical light chains; disulfide-linked.

The protein localises to the secreted. It is found in the cell membrane. V region of the variable domain of immunoglobulin light chains that participates in the antigen recognition. Immunoglobulins, also known as antibodies, are membrane-bound or secreted glycoproteins produced by B lymphocytes. In the recognition phase of humoral immunity, the membrane-bound immunoglobulins serve as receptors which, upon binding of a specific antigen, trigger the clonal expansion and differentiation of B lymphocytes into immunoglobulins-secreting plasma cells. Secreted immunoglobulins mediate the effector phase of humoral immunity, which results in the elimination of bound antigens. The antigen binding site is formed by the variable domain of one heavy chain, together with that of its associated light chain. Thus, each immunoglobulin has two antigen binding sites with remarkable affinity for a particular antigen. The variable domains are assembled by a process called V-(D)-J rearrangement and can then be subjected to somatic hypermutations which, after exposure to antigen and selection, allow affinity maturation for a particular antigen. This chain is Immunoglobulin lambda variable 5-52, found in Homo sapiens (Human).